The chain runs to 487 residues: G-patch domain and KOW motifs-containing protein (487 aa).

3 disordered regions span residues 65–121 (HKNR…PLLM), 181–232 (VKPL…TGSA), and 295–367 (KVHQ…RPEP). Residues 88 to 116 (AVLSQAVKELIEESRRAQEDNSETNQTLS) are a coiled coil. 2 stretches are compositionally biased toward basic and acidic residues: residues 96-106 (ELIEESRRAQE) and 200-209 (SALKHLEPQK). In terms of domain architecture, G-patch spans 154 to 200 (VQQYGMAMLRGMGWKEGEGIGRTFKQDVKPLEQKLRPKGLGLGADRS). Residues 226-253 (GLGTGSAVQIQSGAYKDMYGKVEGIDPD) form the KOW 1 domain. Basic and acidic residues-rich tracts occupy residues 295 to 333 (KVHQ…DVKL) and 352 to 367 (RSPE…RPEP). The KOW 2 domain occupies 428 to 455 (PKEEGEHVMVVLGKYRGMVGKILHRDKQ).

It belongs to the MOS2 family. In terms of assembly, component of the minor spliceosome, which splices U12-type introns.

It localises to the nucleus. Its function is as follows. RNA-binding protein involved in pre-mRNA splicing. This Xenopus laevis (African clawed frog) protein is G-patch domain and KOW motifs-containing protein (gpkow).